Here is a 71-residue protein sequence, read N- to C-terminus: Small ribosomal subunit protein bS21 (71 aa).

It belongs to the bacterial ribosomal protein bS21 family.

The chain is Small ribosomal subunit protein bS21 from Shewanella woodyi (strain ATCC 51908 / MS32).